Reading from the N-terminus, the 180-residue chain is Epididymal-specific lipocalin-6 (180 aa).

Residues 1–20 (MGGLLLAALLALVAVPRAQA) form the signal peptide. A disulfide bond links Cys81 and Cys174.

This sequence belongs to the calycin superfamily. Lipocalin family.

The protein resides in the secreted. In terms of biological role, may play a role in male fertility. The polypeptide is Epididymal-specific lipocalin-6 (LCN6) (Macaca mulatta (Rhesus macaque)).